We begin with the raw amino-acid sequence, 350 residues long: MDINLFDFHLPEELIAQVPLEERETSRLMVLDRETGDIEHKHFTDILSYLHEGDCLVLNETKVMPARLQGVKEDTGAHIEVLLLKQEEGDKWETLVKPAKRVKEGTVISFGEGKLKATCTGTADQGGRQLEFSYDGIFYEILDELGEMPLPPYIKETLEDRDRYQTVYAKEIGSAAAPTAGLHFTEELLEKLKQKGVELAFITLHVGLGTFRPVSADTIEEHHMHAEYYHMSEETAALLNRVKENGGRIITVGTTSTRTLETIATDHDGKLCAASGWTDIFMYPGYEFKAIDGLITNFHLPKSTLIMLVSAFANRDNVLHAYNEAVKEKYRFFSFGDAMFVASHAKMGNK.

This sequence belongs to the QueA family. As to quaternary structure, monomer.

Its subcellular location is the cytoplasm. The enzyme catalyses 7-aminomethyl-7-carbaguanosine(34) in tRNA + S-adenosyl-L-methionine = epoxyqueuosine(34) in tRNA + adenine + L-methionine + 2 H(+). It participates in tRNA modification; tRNA-queuosine biosynthesis. Functionally, transfers and isomerizes the ribose moiety from AdoMet to the 7-aminomethyl group of 7-deazaguanine (preQ1-tRNA) to give epoxyqueuosine (oQ-tRNA). The chain is S-adenosylmethionine:tRNA ribosyltransferase-isomerase from Bacillus cereus (strain ZK / E33L).